Here is a 251-residue protein sequence, read N- to C-terminus: MTAPRDPFFPADLSIRASAEPIEIQRLGLIDYQEAWDYQAELATRRANDEIPDQLLILEHPSVYTAGKRTQPEDLPTNGLPVINADRGGRITWHGPGQLVIYPIIKLADPIDVVDYVRRLEEALIQVVGDMGVAGAGRIDGRSGVWVPAHDGWVDSKVAAIGIRITRGVAMHGVAINCNNTLDFYEHIIPCGIADAGLSTLSRELKRDVSVEELVEPSIRALDDALAGRLVVSDHSFGSAPDPTKNLPKRG.

In terms of domain architecture, BPL/LPL catalytic spans 49 to 230 (DEIPDQLLIL…ALDDALAGRL (182 aa)). Substrate contacts are provided by residues 87–94 (RGGRITWH), 160–162 (AIG), and 173–175 (GVA). Cys-191 (acyl-thioester intermediate) is an active-site residue.

Belongs to the LipB family.

Its subcellular location is the cytoplasm. The catalysed reaction is octanoyl-[ACP] + L-lysyl-[protein] = N(6)-octanoyl-L-lysyl-[protein] + holo-[ACP] + H(+). It functions in the pathway protein modification; protein lipoylation via endogenous pathway; protein N(6)-(lipoyl)lysine from octanoyl-[acyl-carrier-protein]: step 1/2. Functionally, catalyzes the transfer of endogenously produced octanoic acid from octanoyl-acyl-carrier-protein onto the lipoyl domains of lipoate-dependent enzymes. Lipoyl-ACP can also act as a substrate although octanoyl-ACP is likely to be the physiological substrate. The sequence is that of Octanoyltransferase from Corynebacterium glutamicum (strain R).